A 258-amino-acid chain; its full sequence is 5'-nucleotidase SurE (258 aa).

The a divalent metal cation site is built by Asp-8, Asp-9, Ser-40, and Asn-98.

Belongs to the SurE nucleotidase family. It depends on a divalent metal cation as a cofactor.

It is found in the cytoplasm. The enzyme catalyses a ribonucleoside 5'-phosphate + H2O = a ribonucleoside + phosphate. Its function is as follows. Nucleotidase that shows phosphatase activity on nucleoside 5'-monophosphates. This is 5'-nucleotidase SurE from Synechococcus elongatus (strain ATCC 33912 / PCC 7942 / FACHB-805) (Anacystis nidulans R2).